A 447-amino-acid polypeptide reads, in one-letter code: Rab GDP dissociation inhibitor alpha (447 aa).

It belongs to the Rab GDI family. As to quaternary structure, interacts with RHOH. Interacts with the non-phosphorylated forms of RAB1A, RAB3A, RAB5A, RAB5B, RAB5C, RAB8A, RAB8B, RAB10, RAB12, RAB35, and RAB43. In terms of tissue distribution, brain; predominant in neural and sensory tissues.

It localises to the cytoplasm. The protein localises to the golgi apparatus. Its subcellular location is the trans-Golgi network. In terms of biological role, regulates the GDP/GTP exchange reaction of most Rab proteins by inhibiting the dissociation of GDP from them, and the subsequent binding of GTP to them. Promotes the dissociation of GDP-bound Rab proteins from the membrane and inhibits their activation. Promotes the dissociation of RAB1A, RAB3A, RAB5A and RAB10 from membranes. The chain is Rab GDP dissociation inhibitor alpha (GDI1) from Homo sapiens (Human).